A 104-amino-acid polypeptide reads, in one-letter code: Growth-regulated protein homolog alpha (104 aa).

The first 30 residues, Met-1–Ala-30, serve as a signal peptide directing secretion. 2 cysteine pairs are disulfide-bonded: Cys-40–Cys-66 and Cys-42–Cys-82.

Belongs to the intercrine alpha (chemokine CxC) family.

The protein localises to the secreted. This is Growth-regulated protein homolog alpha from Bos taurus (Bovine).